We begin with the raw amino-acid sequence, 203 residues long: Small ribosomal subunit protein uS4 (203 aa).

The tract at residues 20–45 (LPGLTRKRPKNTNPPGMHGAERKKKS) is disordered. In terms of domain architecture, S4 RNA-binding spans 92–155 (MRLDCIVFRL…SSRKLVAAYA (64 aa)).

It belongs to the universal ribosomal protein uS4 family. In terms of assembly, part of the 30S ribosomal subunit. Contacts protein S5. The interaction surface between S4 and S5 is involved in control of translational fidelity.

Its function is as follows. One of the primary rRNA binding proteins, it binds directly to 16S rRNA where it nucleates assembly of the body of the 30S subunit. In terms of biological role, with S5 and S12 plays an important role in translational accuracy. This Synechococcus sp. (strain JA-3-3Ab) (Cyanobacteria bacterium Yellowstone A-Prime) protein is Small ribosomal subunit protein uS4.